A 214-amino-acid chain; its full sequence is Putative 3-methyladenine DNA glycosylase (214 aa).

Belongs to the DNA glycosylase MPG family.

This is Putative 3-methyladenine DNA glycosylase from Mycobacterium leprae (strain Br4923).